We begin with the raw amino-acid sequence, 354 residues long: Ferrochelatase (354 aa).

2 residues coordinate Fe cation: histidine 191 and glutamate 271.

The protein belongs to the ferrochelatase family.

It is found in the cytoplasm. The catalysed reaction is heme b + 2 H(+) = protoporphyrin IX + Fe(2+). Its pathway is porphyrin-containing compound metabolism; protoheme biosynthesis; protoheme from protoporphyrin-IX: step 1/1. Its function is as follows. Catalyzes the ferrous insertion into protoporphyrin IX. This Rickettsia bellii (strain OSU 85-389) protein is Ferrochelatase.